The chain runs to 158 residues: 6,7-dimethyl-8-ribityllumazine synthase (158 aa).

5-amino-6-(D-ribitylamino)uracil-binding positions include F22, 57 to 59 (AVE), and 81 to 83 (AVI). A (2S)-2-hydroxy-3-oxobutyl phosphate-binding site is contributed by 86 to 87 (GT). Catalysis depends on H89, which acts as the Proton donor. F114 is a 5-amino-6-(D-ribitylamino)uracil binding site. R128 serves as a coordination point for (2S)-2-hydroxy-3-oxobutyl phosphate.

It belongs to the DMRL synthase family. Forms an icosahedral capsid composed of 60 subunits, arranged as a dodecamer of pentamers.

It catalyses the reaction (2S)-2-hydroxy-3-oxobutyl phosphate + 5-amino-6-(D-ribitylamino)uracil = 6,7-dimethyl-8-(1-D-ribityl)lumazine + phosphate + 2 H2O + H(+). The protein operates within cofactor biosynthesis; riboflavin biosynthesis; riboflavin from 2-hydroxy-3-oxobutyl phosphate and 5-amino-6-(D-ribitylamino)uracil: step 1/2. Its function is as follows. Catalyzes the formation of 6,7-dimethyl-8-ribityllumazine by condensation of 5-amino-6-(D-ribitylamino)uracil with 3,4-dihydroxy-2-butanone 4-phosphate. This is the penultimate step in the biosynthesis of riboflavin. This chain is 6,7-dimethyl-8-ribityllumazine synthase, found in Shewanella putrefaciens (strain CN-32 / ATCC BAA-453).